The chain runs to 202 residues: Ribonuclease HII (202 aa).

One can recognise an RNase H type-2 domain in the interval Leu-12–Glu-201. The a divalent metal cation site is built by Asp-18, Glu-19, and Asp-110.

This sequence belongs to the RNase HII family. Mn(2+) is required as a cofactor. Mg(2+) serves as cofactor.

Its subcellular location is the cytoplasm. It carries out the reaction Endonucleolytic cleavage to 5'-phosphomonoester.. In terms of biological role, endonuclease that specifically degrades the RNA of RNA-DNA hybrids. The chain is Ribonuclease HII from Coxiella burnetii (strain CbuK_Q154) (Coxiella burnetii (strain Q154)).